The following is a 467-amino-acid chain: Ankyrin repeat and SOCS box protein 10 (467 aa).

7 ANK repeats span residues 115–144, 147–176, 180–209, 214–243, 247–289, 293–322, and 326–361; these read ELTT…KPDS, GGRT…DPNT, DGKR…QVDG, EEET…CPDV, EGWT…DADA, DKQR…NANA, and GGHT…AVRV. The SOCS box domain occupies 412-467; the sequence is YSSLFALVRQPRSLQHLCRCALRSHLEGCLPHALPRLPLPPRMLRFLQLDFEDLLY.

The protein belongs to the ankyrin SOCS box (ASB) family.

It is found in the nucleus. The protein localises to the cytoplasm. It participates in protein modification; protein ubiquitination. Its function is as follows. May be a substrate-recognition component of a SCF-like ECS (Elongin-Cullin-SOCS-box protein) E3 ubiquitin-protein ligase complex which mediates the ubiquitination and subsequent proteasomal degradation of target proteins. The protein is Ankyrin repeat and SOCS box protein 10 (Asb10) of Mus musculus (Mouse).